A 430-amino-acid chain; its full sequence is Histidine--tRNA ligase (430 aa).

Belongs to the class-II aminoacyl-tRNA synthetase family. As to quaternary structure, homodimer.

The protein localises to the cytoplasm. The enzyme catalyses tRNA(His) + L-histidine + ATP = L-histidyl-tRNA(His) + AMP + diphosphate + H(+). The chain is Histidine--tRNA ligase from Acinetobacter baylyi (strain ATCC 33305 / BD413 / ADP1).